The chain runs to 158 residues: Lectin-like protein EP153R (158 aa).

Residues 1 to 26 (MFLNKKYPSLIEKKMDDLMTLKFCYL) are Cytoplasmic-facing. The helical transmembrane segment at 27–47 (IITFLIITNIFSLAINIWGGG) threads the bilayer. The Extracellular portion of the chain corresponds to 48-158 (DMIDRQSCEN…YTETFFICSN (111 aa)). A disulfide bridge links cysteine 61 with cysteine 72. A lectin-like region spans residues 61–157 (CPKDWVGYNN…KYTETFFICS (97 aa)). N-linked (GlcNAc...) asparagine; by host glycans are attached at residues asparagine 81, asparagine 94, asparagine 100, asparagine 106, asparagine 112, asparagine 119, and asparagine 139.

This sequence belongs to the asfivirus lectin-like protein family. As to quaternary structure, homodimer.

The protein resides in the host endoplasmic reticulum membrane. Its function is as follows. Down-regulates MHC-I expression by impairing the appropriate configuration or presentation into the plasma membrane of the latter. Participates in viral hemadsorption, which may help viral spread. Reduces the transactivating activity of host TP53, thus inhibiting apoptosis. Non-essential for virus growth in swine macrophage cell cultures. The protein is Lectin-like protein EP153R of African swine fever virus (isolate Pig/Kenya/KEN-50/1950) (ASFV).